A 518-amino-acid polypeptide reads, in one-letter code: Glutamate--cysteine ligase (518 aa).

Belongs to the glutamate--cysteine ligase type 1 family. Type 1 subfamily.

The enzyme catalyses L-cysteine + L-glutamate + ATP = gamma-L-glutamyl-L-cysteine + ADP + phosphate + H(+). The protein operates within sulfur metabolism; glutathione biosynthesis; glutathione from L-cysteine and L-glutamate: step 1/2. The sequence is that of Glutamate--cysteine ligase from Escherichia coli O7:K1 (strain IAI39 / ExPEC).